The primary structure comprises 156 residues: Ribosomal RNA large subunit methyltransferase H (156 aa).

Residues L73, G104, and 123 to 128 (LSALTL) each bind S-adenosyl-L-methionine.

This sequence belongs to the RNA methyltransferase RlmH family. As to quaternary structure, homodimer.

It localises to the cytoplasm. The catalysed reaction is pseudouridine(1915) in 23S rRNA + S-adenosyl-L-methionine = N(3)-methylpseudouridine(1915) in 23S rRNA + S-adenosyl-L-homocysteine + H(+). Functionally, specifically methylates the pseudouridine at position 1915 (m3Psi1915) in 23S rRNA. In Shewanella loihica (strain ATCC BAA-1088 / PV-4), this protein is Ribosomal RNA large subunit methyltransferase H.